The chain runs to 155 residues: Small ribosomal subunit protein uS7 (155 aa).

Belongs to the universal ribosomal protein uS7 family. In terms of assembly, part of the 30S ribosomal subunit. Contacts proteins S9 and S11.

One of the primary rRNA binding proteins, it binds directly to 16S rRNA where it nucleates assembly of the head domain of the 30S subunit. Is located at the subunit interface close to the decoding center, probably blocks exit of the E-site tRNA. The sequence is that of Small ribosomal subunit protein uS7 from Lactococcus lactis subsp. lactis (strain IL1403) (Streptococcus lactis).